The primary structure comprises 707 residues: Acyl-CoA ligase 891, peroxisomal (707 aa).

Residue 259–270 participates in ATP binding; that stretch reads INYTSGTTGPPK. Residues 525–549 form a fatty acid-binding region; that stretch reads DGWFRTGDVCTIDEKGRFIIIDRRK. The short motif at 705–707 is the Peroxisome targeting signal element; it reads AKL.

Belongs to the ATP-dependent AMP-binding enzyme family.

The protein localises to the peroxisome matrix. It carries out the reaction (4E,8E)-10-(4-hydroxy-6-methoxy-7-methyl-3-oxo-1,3-dihydro-2-benzofuran-5-yl)-4,8-dimethyldeca-4,8-dienoate + ATP + CoA = (4E,8E)-10-(4-hydroxy-6-methoxy-7-methyl-3-oxo-1,3-dihydro-2-benzofuran-5-yl)-4,8-dimethyldeca-4,8-dienoyl-CoA + AMP + diphosphate. It participates in secondary metabolite biosynthesis; terpenoid biosynthesis. In terms of biological role, acyl-CoA ligase involved in the biosynthesis of mycophenolic acid (MPA), the first isolated antibiotic natural product in the world obtained from a culture of Penicillium brevicompactum in 1893. The peroxisomal acyl-CoA ligase 891 converts the intermediate MFDHMP-3C into MFDHMP-3C-CoA which impairs its diffusion from the peroxisome. The first step of the pathway is the synthesis of 5-methylorsellinic acid (5MOA) by the cytosolic polyketide synthase mpaC. 5MOA is then converted to the phthalide compound 5,7-dihydroxy-4,6-dimethylphthalide (DHMP) by the endoplasmic reticulum-bound cytochrome P450 monooxygenase mpaDE. MpaDE first catalyzes hydroxylation of 5-MOA to 4,6-dihydroxy-2-(hydroxymethyl)-3-methylbenzoic acid (DHMB). MpaDE then acts as a lactone synthase that catalyzes the ring closure to convert DHMB into DHMP. The next step is the prenylation of DHMP by the Golgi apparatus-associated prenyltransferase mpaA to yield farnesyl-DHMP (FDHMP). The ER-bound oxygenase mpaB then mediates the oxidative cleavage the C19-C20 double bond in FDHMP to yield FDHMP-3C via a mycophenolic aldehyde intermediate. The O-methyltransferase mpaG catalyzes the methylation of FDHMP-3C to yield MFDHMP-3C. After the cytosolic methylation of FDHMP-3C, MFDHMP-3C enters into peroxisomes probably via free diffusion due to its low molecular weight. Upon a peroxisomal CoA ligation reaction, catalyzed by a beta-oxidation component enzyme acyl-CoA ligase ACL891, MFDHMP-3C-CoA would then be restricted to peroxisomes for the following beta-oxidation pathway steps. The peroxisomal beta-oxidation machinery than converts MFDHMP-3C-CoA into MPA_CoA, via a beta-oxidation chain-shortening process. Finally mpaH acts as a peroxisomal acyl-CoA hydrolase with high substrate specificity toward MPA-CoA to release the final product MPA. This chain is Acyl-CoA ligase 891, peroxisomal, found in Penicillium roqueforti (strain FM164).